A 281-amino-acid chain; its full sequence is Phosphatidylglycerol--prolipoprotein diacylglyceryl transferase (281 aa).

4 helical membrane passes run 23-43 (IGPLAVHWYGLGYVVGILFAW), 71-91 (FVIWAALGVVLGGRIGYVLFY), 107-127 (WDGGMSFHGGILGTTLAMILF), and 133-153 (ILVWSMFDTIAAGVPIGLGVV). Residue arginine 154 coordinates a 1,2-diacyl-sn-glycero-3-phospho-(1'-sn-glycerol). Transmembrane regions (helical) follow at residues 189–209 (LYEAFLEGLVLFFVLFVLVWG), 217–237 (GFVAGAFVTGYGLSRIAVEFF), and 247–267 (LFGGWLTMGMVLSVPMVLLGL).

This sequence belongs to the Lgt family.

Its subcellular location is the cell inner membrane. The enzyme catalyses L-cysteinyl-[prolipoprotein] + a 1,2-diacyl-sn-glycero-3-phospho-(1'-sn-glycerol) = an S-1,2-diacyl-sn-glyceryl-L-cysteinyl-[prolipoprotein] + sn-glycerol 1-phosphate + H(+). Its pathway is protein modification; lipoprotein biosynthesis (diacylglyceryl transfer). Functionally, catalyzes the transfer of the diacylglyceryl group from phosphatidylglycerol to the sulfhydryl group of the N-terminal cysteine of a prolipoprotein, the first step in the formation of mature lipoproteins. The polypeptide is Phosphatidylglycerol--prolipoprotein diacylglyceryl transferase (Brucella canis (strain ATCC 23365 / NCTC 10854 / RM-666)).